A 593-amino-acid polypeptide reads, in one-letter code: UvrABC system protein C (593 aa).

Residues 17-94 (MEPGCYLMKD…IKQYQPRYNI (78 aa)) enclose the GIY-YIG domain. Positions 199–234 (KTILKSLEERMLTASESLDFERAKEYRDLIQHIQNL) constitute a UVR domain.

This sequence belongs to the UvrC family. In terms of assembly, interacts with UvrB in an incision complex.

The protein resides in the cytoplasm. The UvrABC repair system catalyzes the recognition and processing of DNA lesions. UvrC both incises the 5' and 3' sides of the lesion. The N-terminal half is responsible for the 3' incision and the C-terminal half is responsible for the 5' incision. The protein is UvrABC system protein C of Staphylococcus aureus (strain USA300).